Reading from the N-terminus, the 902-residue chain is 4-hydroxyphenylacetate decarboxylase glycyl radical subunit (902 aa).

The PFL domain maps to Lys38–Leu774. 4-hydroxyphenylacetate contacts are provided by Ser348 and Cys507. Cys507 (cysteine radical intermediate) is an active-site residue. Residue Glu509 is the Proton donor of the active site. His540 and Glu641 together coordinate 4-hydroxyphenylacetate. The region spanning Gly782 to Val902 is the Glycine radical domain. Gly877 bears the Glycine radical mark.

The protein belongs to the glycyl radical enzyme (GRE) family. HPAD subfamily. In terms of assembly, heterooctamer consisting of 4 large (HpdB) subunits and 4 small (HpdC) subunits, arranged as a tetramer of heterodimers. Also forms a catalytically inactive homodimer. Requires the activating protein CsdA to generate the key active site glycyl radical that is involved in catalysis. Post-translationally, phosphorylated on serine. Phosphorylation may trigger the formation of the active heterooctamers and thereby regulates enzyme activity.

The catalysed reaction is 4-hydroxyphenylacetate + H(+) = 4-methylphenol + CO2. The enzyme catalyses 3,4-dihydroxyphenylacetate + H(+) = 4-methylcatechol + CO2. Glycyl radical subunit of the HPA decarboxylase that decarboxylates phenylacetates with a hydroxyl group in the p-position. Active toward 4-hydroxyphenylacetate and 3,4-dihydroxyphenylacetate, forming 4-methylphenol and 4-methylcatechol, respectively. Is likely involved in the catabolism of aromatic amino acids such as tyrosine fermentation. 4-methylphenol (p-cresol) formation provides metabolic toxicity, which allows an active suppression of other microbes and may provide growth advantages for the producers in highly competitive environments. The large subunit is the catalytic subunit that binds the substrate. The polypeptide is 4-hydroxyphenylacetate decarboxylase glycyl radical subunit (Clostridioides difficile (strain CD196) (Peptoclostridium difficile)).